The chain runs to 89 residues: MSDRKAVIKNADMSEEMQQDAVDCATQALEKYNIEKDIAAFIKKEFDKKYNPTWHCIVGRNFGSYVTHETRHFIYFYLGQVAILLFKSG.

The protein belongs to the dynein light chain family.

It is found in the cytoplasm. Its subcellular location is the cytoskeleton. In terms of biological role, acts as a non-catalytic accessory component of a dynein complex. This chain is Dynein light chain 2, cytoplasmic (Cdlc2), found in Drosophila melanogaster (Fruit fly).